Reading from the N-terminus, the 301-residue chain is Probable deoxyhypusine synthase 1 (301 aa).

Lys269 functions as the Nucleophile in the catalytic mechanism.

The protein belongs to the deoxyhypusine synthase family. NAD(+) is required as a cofactor.

The enzyme catalyses [eIF5A protein]-L-lysine + spermidine = [eIF5A protein]-deoxyhypusine + propane-1,3-diamine. It participates in protein modification; eIF5A hypusination. Its function is as follows. Catalyzes the NAD-dependent oxidative cleavage of spermidine and the subsequent transfer of the butylamine moiety of spermidine to the epsilon-amino group of a specific lysine residue of the eIF-5A precursor protein to form the intermediate deoxyhypusine residue. This Archaeoglobus fulgidus (strain ATCC 49558 / DSM 4304 / JCM 9628 / NBRC 100126 / VC-16) protein is Probable deoxyhypusine synthase 1 (dys1).